A 400-amino-acid polypeptide reads, in one-letter code: Acetate kinase (400 aa).

Asn10 is a binding site for Mg(2+). ATP is bound at residue Lys17. Arg91 is a binding site for substrate. Catalysis depends on Asp150, which acts as the Proton donor/acceptor. Residues 210-214 (HLGNG), 285-287 (DCR), and 333-337 (GIGEN) contribute to the ATP site. Glu387 is a Mg(2+) binding site.

It belongs to the acetokinase family. In terms of assembly, homodimer. It depends on Mg(2+) as a cofactor. Mn(2+) is required as a cofactor.

The protein localises to the cytoplasm. It carries out the reaction acetate + ATP = acetyl phosphate + ADP. It functions in the pathway metabolic intermediate biosynthesis; acetyl-CoA biosynthesis; acetyl-CoA from acetate: step 1/2. Functionally, catalyzes the formation of acetyl phosphate from acetate and ATP. Can also catalyze the reverse reaction. This Proteus mirabilis (strain HI4320) protein is Acetate kinase.